A 159-amino-acid polypeptide reads, in one-letter code: Cytochrome c-type biogenesis protein CcmE (159 aa).

Topologically, residues 1–8 (MNIRRKNR) are cytoplasmic. A helical; Signal-anchor for type II membrane protein transmembrane segment spans residues 9-29 (LWIACAVLAGLALTITLVLYA). Residues 30-159 (LRSNIDLFYT…PESVYKDKAS (130 aa)) lie on the Periplasmic side of the membrane. Positions 130 and 134 each coordinate heme. The interval 130-159 (HDENYTPPEVEKAMQENHRRPESVYKDKAS) is disordered.

Belongs to the CcmE/CycJ family.

The protein localises to the cell inner membrane. Functionally, heme chaperone required for the biogenesis of c-type cytochromes. Transiently binds heme delivered by CcmC and transfers the heme to apo-cytochromes in a process facilitated by CcmF and CcmH. This is Cytochrome c-type biogenesis protein CcmE from Citrobacter koseri (strain ATCC BAA-895 / CDC 4225-83 / SGSC4696).